The following is a 380-amino-acid chain: ATP phosphoribosyltransferase regulatory subunit (380 aa).

The protein belongs to the class-II aminoacyl-tRNA synthetase family. HisZ subfamily. Heteromultimer composed of HisG and HisZ subunits.

It localises to the cytoplasm. It participates in amino-acid biosynthesis; L-histidine biosynthesis; L-histidine from 5-phospho-alpha-D-ribose 1-diphosphate: step 1/9. Required for the first step of histidine biosynthesis. May allow the feedback regulation of ATP phosphoribosyltransferase activity by histidine. The chain is ATP phosphoribosyltransferase regulatory subunit from Thermoanaerobacter pseudethanolicus (strain ATCC 33223 / 39E) (Clostridium thermohydrosulfuricum).